Here is a 291-residue protein sequence, read N- to C-terminus: U7 snRNA-associated Sm-like protein LSm11 (291 aa).

Residues 55 to 84 (ARGRARGAQRGQSRGPGGKRKGRKPEPDPE) form a disordered region. In terms of domain architecture, Sm spans 124–199 (SPLGELNRCV…LTLTRLFDRL (76 aa)). Residues 155–289 (GFIVAFDKFW…RGENVLLVHI (135 aa)) are SM. The disordered stretch occupies residues 203–266 (EPGSHDPAKG…RRNRKEKVDY (64 aa)). Over residues 251 to 261 (NRPKQRRRNRK) the composition is skewed to basic residues.

It belongs to the snRNP Sm proteins family. In terms of assembly, component of the heptameric ring U7 snRNP complex.

It localises to the nucleus. In terms of biological role, component of the U7 snRNP complex that is involved in the histone 3'-end pre-mRNA processing. Increases U7 snRNA levels but not histone 3'-end pre-mRNA processing activity, when overexpressed. Binds specifically to the Sm-binding site of U7 snRNA. In Xenopus laevis (African clawed frog), this protein is U7 snRNA-associated Sm-like protein LSm11.